The following is an 87-amino-acid chain: Small ribosomal subunit protein bS20 (87 aa).

The protein belongs to the bacterial ribosomal protein bS20 family.

In terms of biological role, binds directly to 16S ribosomal RNA. This is Small ribosomal subunit protein bS20 from Corynebacterium diphtheriae (strain ATCC 700971 / NCTC 13129 / Biotype gravis).